A 142-amino-acid polypeptide reads, in one-letter code: MVDATAPKKRTFKQFSFKGVDLKDLVEMPTEEFTKLCGARVRRRFSRGLDSKPMGLIKKLRAARAATEPNERPAVVKTHLRNMIVVPEMIGSVVGVYNGKVFNTVEIKPEMVGHYLGEFSITYTPVRHGRAGNASSKFMPLR.

It belongs to the universal ribosomal protein uS19 family. Component of the small ribosomal subunit. Mature ribosomes consist of a small (40S) and a large (60S) subunit. The 40S subunit contains about 32 different proteins and 1 molecule of RNA (18S). The 60S subunit contains 45 different proteins and 3 molecules of RNA (25S, 5.8S and 5S).

It is found in the cytoplasm. Component of the ribosome, a large ribonucleoprotein complex responsible for the synthesis of proteins in the cell. The small ribosomal subunit (SSU) binds messenger RNAs (mRNAs) and translates the encoded message by selecting cognate aminoacyl-transfer RNA (tRNA) molecules. The large subunit (LSU) contains the ribosomal catalytic site termed the peptidyl transferase center (PTC), which catalyzes the formation of peptide bonds, thereby polymerizing the amino acids delivered by tRNAs into a polypeptide chain. The nascent polypeptides leave the ribosome through a tunnel in the LSU and interact with protein factors that function in enzymatic processing, targeting, and the membrane insertion of nascent chains at the exit of the ribosomal tunnel. RPS15 has a role in the late stage of the assembly of pre-40S particles within the nucleus and controls their export to the cytoplasm. This Candida albicans (strain SC5314 / ATCC MYA-2876) (Yeast) protein is Small ribosomal subunit protein uS19 (RPS15).